A 96-amino-acid chain; its full sequence is UPF0235 protein NT01EI_0281 (96 aa).

This sequence belongs to the UPF0235 family.

This chain is UPF0235 protein NT01EI_0281, found in Edwardsiella ictaluri (strain 93-146).